The chain runs to 384 residues: Helix-loop-helix protein delilah (384 aa).

Disordered regions lie at residues 1–101 and 187–227; these read MKSN…TANA and EEAE…KIVP. Over residues 75 to 86 the composition is skewed to basic residues; the sequence is KSRKNAPTKSKT. The bHLH domain occupies 94-153; sequence YRRKTANARERTRMREINTAFETLRHCVPEAIKGEDAANTNEKLTKITTLRLAMKYITML. The segment covering 209 to 224 has biased composition (low complexity); sequence KKSSAASKRQSQKQAK.

Efficient DNA binding requires dimerization with another bHLH protein, possibly with da. Expressed almost exclusively in the attachments sites of the somatic muscles to tendon cells in the epidermis.

Its subcellular location is the nucleus. Functionally, probably plays an important role in the differentiation of epidermal cells into the tendon cells that form the attachment sites for all muscles. The chain is Helix-loop-helix protein delilah (tx) from Drosophila melanogaster (Fruit fly).